Here is a 177-residue protein sequence, read N- to C-terminus: N-acetylmuramoyl-L-alanine amidase A (177 aa).

One can recognise an N-acetylmuramoyl-L-alanine amidase domain in the interval glutamine 23–glycine 158. The cysteines at positions 114 and 121 are disulfide-linked.

It is found in the secreted. The catalysed reaction is Hydrolyzes the link between N-acetylmuramoyl residues and L-amino acid residues in certain cell-wall glycopeptides.. Its function is as follows. Antibacterial activity against Gram-positive bacteria M.luteus, S.aureus, E.faecalis and P.acidilactici and Gram-negative bacterium E.coli. The protein is N-acetylmuramoyl-L-alanine amidase A (cwhA) of Achromobacter lyticus.